A 408-amino-acid polypeptide reads, in one-letter code: Aminoacylase-1 (408 aa).

His80 contacts Zn(2+). The active site involves Asp82. Asp113 contacts Zn(2+). Glu147 serves as the catalytic Proton acceptor. Residues Glu148, Glu175, and His373 each contribute to the Zn(2+) site.

It belongs to the peptidase M20A family. In terms of assembly, homodimer. Interacts with SPHK1. Requires Zn(2+) as cofactor.

The protein localises to the cytoplasm. It catalyses the reaction an N-acyl-L-amino acid + H2O = an L-alpha-amino acid + a carboxylate. It carries out the reaction N-acetyl-L-methionine + H2O = L-methionine + acetate. The catalysed reaction is N-acetyl-L-glutamine + H2O = L-glutamine + acetate. In terms of biological role, catalyzes the hydrolysis of N-acetylated amino acids to acetate and free amino acids. The polypeptide is Aminoacylase-1 (Acy1) (Mus musculus (Mouse)).